The primary structure comprises 449 residues: Wilms tumor protein homolog (449 aa).

The segment at 48 to 84 is disordered; it reads YGSLGGPAPPPAPPPPPPPPPHSFIKQEPSWGGAEPH. Pro residues predominate over residues 54–69; the sequence is PAPPPAPPPPPPPPPH. Residues Lys73 and Lys177 each participate in a glycyl lysine isopeptide (Lys-Gly) (interchain with G-Cter in SUMO) cross-link. The 9aaTAD motif lies at 236-244; that stretch reads MTWNQMNLG. 3 C2H2-type zinc fingers span residues 323–347, 353–377, and 383–405; these read FMCA…SRKH, YQCD…QRRH, and FQCK…TRTH. 2 important for interaction with target DNA regions span residues 367-381 and 393-401; these read SDQL…TGVK and SRSDHLKTH. A KTS motif motif is present at residues 408–410; it reads KTS. Residues 414 to 438 form a C2H2-type 4 zinc finger; that stretch reads FSCRWPSCQKKFARSDELVRHHNMH. Residue Lys444 forms a Glycyl lysine isopeptide (Lys-Gly) (interchain with G-Cter in SUMO2) linkage.

It belongs to the EGR C2H2-type zinc-finger protein family. In terms of assembly, interacts with ZNF224 via the zinc-finger region. Interacts with WTAP, AMER1 and SRY. Homodimer. Interacts with WTIP. Interacts with actively translating polysomes. Detected in nuclear ribonucleoprotein (mRNP) particles. Interacts with U2AF2. Interacts with HNRNPU via the zinc-finger region. Interacts with CITED2. Interacts with RBM4.

Its subcellular location is the nucleus speckle. It localises to the nucleus. It is found in the nucleoplasm. The protein resides in the nucleolus. The protein localises to the cytoplasm. Functionally, transcription factor that plays an important role in cellular development and cell survival. Recognizes and binds to the DNA sequence 5'-GCG(T/G)GGGCG-3'. Regulates the expression of numerous target genes, including EPO. Plays an essential role for development of the urogenital system. It has a tumor suppressor as well as an oncogenic role in tumor formation. Function may be isoform-specific: isoforms lacking the KTS motif may act as transcription factors. Isoforms containing the KTS motif may bind mRNA and play a role in mRNA metabolism or splicing. Isoform 1 has lower affinity for DNA, and can bind RNA. This Sus scrofa (Pig) protein is Wilms tumor protein homolog (WT1).